The chain runs to 715 residues: Transcription activator of gluconeogenesis MGYG_02011 (715 aa).

Residues 1-14 are compositionally biased toward polar residues; sequence MSPHQTTGQESDNM. Positions 1–28 are disordered; that stretch reads MSPHQTTGQESDNMAVNGENAPASSQYI. The segment at residues 66 to 94 is a DNA-binding region (zn(2)-C6 fungal-type); it reads CYACQRGHLTCGDERPCQRCIKRGFQDAC. Composition is skewed to polar residues over residues 129–166, 179–191, 203–223, and 362–385; these read QNNV…PQNK, YASQ…TYQI, SLPQ…GQFN, and MMTT…RPNA. Disordered regions lie at residues 129–223, 354–414, 534–569, and 628–663; these read QNNV…GQFN, SPAS…RRRH, NHNV…NSST, and GSNG…NGRG. A compositionally biased stretch (low complexity) spans 386–400; it reads SVSQQRQQPVVSTPQ. Composition is skewed to polar residues over residues 535 to 554 and 639 to 649; these read HNVN…SRGS and GEASSSEANEL. Residues 650–662 show a composition bias toward low complexity; it reads NGSNANGATTNGR.

The protein belongs to the ERT1/acuK family.

The protein localises to the nucleus. Functionally, transcription factor which regulates nonfermentable carbon utilization. Activator of gluconeogenetic genes. In Arthroderma gypseum (strain ATCC MYA-4604 / CBS 118893) (Microsporum gypseum), this protein is Transcription activator of gluconeogenesis MGYG_02011.